Here is a 624-residue protein sequence, read N- to C-terminus: METVNTTARLTTLRSLMKENGVDIYGIIVPSEDSHASEYIAPCDGRRAFISGFTGSAGTAVVTQDKAALATDGRYFNQAGKQLDGNWHLLKTGLQDVPTWQDWTAEASAGGKTVGVDPSLISSPIAEKLDESIKKSGGAGLKAVSENLVDPVWGSDRPARSSNPVKLLIGKYSGKDTAAKLTELRKELEKKKAAAFVLSMLDEVAWLFNLRGSDITYNPVFYSYAIVTQDSATLYVDVSKLDDESRSYLDQNKVTIKPYDTLFEDAKALASAAEAKGTSEAPRKYFVSNKGSWALKLALGGDKFVEEVRSPVGDAKAVKNDTELEGMRQCHIRDGVALIQFFAWLEDQLVNKKAVLDEVAAADQLEALRSKQTDFVGLSFDTISSTGPNAAVIHYKPEPGACSIIDPEAIYLCDSGAQFLDGTTDVTRTLHFGTPTAEQKKAYTLVLKGNIALDTAIFPKGTTGYAIDCLARQFLWASSPFSTKQGLDYRHGTGHGVGSYLNVHEGPIGIGTRKQYAEVALAAGNVLSIEPGFYEDGSYGIRIENLAMVREVKTEHSFGDKPFLGFEHVTMVPYCRKLIDEALLTAEEREWLNQSNKEIREKMAGRFDGDQLTQAWLERETQPF.

Positions 414, 425, 530, and 544 each coordinate Mn(2+).

The protein belongs to the peptidase M24B family. Requires Mn(2+) as cofactor.

The enzyme catalyses Release of any N-terminal amino acid, including proline, that is linked to proline, even from a dipeptide or tripeptide.. Catalyzes the removal of a penultimate prolyl residue from the N-termini of peptides. The polypeptide is Probable Xaa-Pro aminopeptidase P (AMPP) (Chaetomium globosum (strain ATCC 6205 / CBS 148.51 / DSM 1962 / NBRC 6347 / NRRL 1970) (Soil fungus)).